Here is a 45-residue protein sequence, read N- to C-terminus: Large ribosomal subunit protein bL34 (45 aa).

Positions 1-45 are disordered; that stretch reads MTKRTFGGTSRKRKRVSGFRVRMRTHTGRSVIRSRRKKGRSRIAV. The span at 10-45 shows a compositional bias: basic residues; that stretch reads SRKRKRVSGFRVRMRTHTGRSVIRSRRKKGRSRIAV.

The protein belongs to the bacterial ribosomal protein bL34 family.

The protein is Large ribosomal subunit protein bL34 of Prochlorococcus marinus (strain SARG / CCMP1375 / SS120).